Reading from the N-terminus, the 65-residue chain is Large ribosomal subunit protein bL35c (65 aa).

The disordered stretch occupies residues 18-50 (SSGKILRHKASKSHLLQKKSSKHRRHLSSTCQV). A compositionally biased stretch (basic residues) spans 22-44 (ILRHKASKSHLLQKKSSKHRRHL).

This sequence belongs to the bacterial ribosomal protein bL35 family.

The protein resides in the plastid. It localises to the chloroplast. This is Large ribosomal subunit protein bL35c from Porphyra purpurea (Red seaweed).